The following is a 414-amino-acid chain: Solute carrier family 25 member 46-B (414 aa).

Over residues 1–13 (MQPRRPDRFDGLE) the composition is skewed to basic and acidic residues. Residues 1–89 (MQPRRPDRFD…AFGEENSGSS (89 aa)) are disordered. Residues 29–50 (YQSSFPARSLSSSGDLSQQWVT) are compositionally biased toward polar residues. The Solcar 1 repeat unit spans residues 92 to 183 (QVNRFAGFGI…GMLSEFTHLP (92 aa)). Transmembrane regions (helical) follow at residues 99–119 (FGIG…CIVL), 159–179 (MGST…LSEF), 198–218 (HLLL…ASLI), 254–274 (LLPL…HYII), 310–330 (FPEL…LYPL), and 379–399 (LGFY…AIVL). A Solcar 2 repeat occupies 307–412 (EDYFPELLAN…KIIYSSVVQT (106 aa)).

It belongs to the mitochondrial carrier (TC 2.A.29) family.

It is found in the mitochondrion outer membrane. May play a role in mitochondrial dynamics by controlling mitochondrial membrane fission. The sequence is that of Solute carrier family 25 member 46-B (slc25a46-b) from Xenopus laevis (African clawed frog).